Reading from the N-terminus, the 436-residue chain is Trigger factor (436 aa).

Positions 161–246 (DDQLNIDFVG…VNSVSEPKLP (86 aa)) constitute a PPIase FKBP-type domain.

This sequence belongs to the FKBP-type PPIase family. Tig subfamily.

It localises to the cytoplasm. It catalyses the reaction [protein]-peptidylproline (omega=180) = [protein]-peptidylproline (omega=0). Its function is as follows. Involved in protein export. Acts as a chaperone by maintaining the newly synthesized protein in an open conformation. Functions as a peptidyl-prolyl cis-trans isomerase. In Pseudomonas fluorescens (strain ATCC BAA-477 / NRRL B-23932 / Pf-5), this protein is Trigger factor.